The following is a 204-amino-acid chain: Ras-related protein RabQ (204 aa).

Position 12–19 (12–19 (GPPFVGKS)) interacts with GTP. Positions 34-42 (MDTTIGVEF) match the Effector region motif. Residues 60–64 (DTAGQ) and 118–121 (NKCD) contribute to the GTP site. 2 S-geranylgeranyl cysteine lipidation sites follow: Cys202 and Cys203.

Belongs to the small GTPase superfamily. Rab family.

The protein resides in the cell membrane. In Dictyostelium discoideum (Social amoeba), this protein is Ras-related protein RabQ (rabQ).